A 270-amino-acid chain; its full sequence is MVKVAVTGALGRMGSGIIKTITETDGLDVVAAIDIPNHPKKGLDIGELTGVGKIGVALSTSDELEVVLKESGAEVLVDFTAPAPCVNTAKTAAKLGVNLVIGTTGFTSEQRAEMENAISENKVAATISQNYAVGVNIFFKTLELLAQKLGDYDIELIEMHHKFKKDAPSGTALRAAEIIQNNLNRDSNLIFGRKGITGERTKEEICIHALRGGDVVGDHTAMFAADGERLELTHKASSRQSFISGVILAVKFVAEKKEGIYNTFDVLDLN.

NAD(+) contacts are provided by residues 8–13 (GALGRM), aspartate 34, 102–104 (GTT), and 128–131 (SQNY). Histidine 160 serves as the catalytic Proton donor/acceptor. Residue histidine 161 participates in (S)-2,3,4,5-tetrahydrodipicolinate binding. Catalysis depends on lysine 164, which acts as the Proton donor. Residue 170 to 171 (GT) participates in (S)-2,3,4,5-tetrahydrodipicolinate binding.

It belongs to the DapB family.

The protein resides in the cytoplasm. The enzyme catalyses (S)-2,3,4,5-tetrahydrodipicolinate + NAD(+) + H2O = (2S,4S)-4-hydroxy-2,3,4,5-tetrahydrodipicolinate + NADH + H(+). It catalyses the reaction (S)-2,3,4,5-tetrahydrodipicolinate + NADP(+) + H2O = (2S,4S)-4-hydroxy-2,3,4,5-tetrahydrodipicolinate + NADPH + H(+). The protein operates within amino-acid biosynthesis; L-lysine biosynthesis via DAP pathway; (S)-tetrahydrodipicolinate from L-aspartate: step 4/4. In terms of biological role, catalyzes the conversion of 4-hydroxy-tetrahydrodipicolinate (HTPA) to tetrahydrodipicolinate. The protein is 4-hydroxy-tetrahydrodipicolinate reductase of Methanococcus maripaludis (strain C5 / ATCC BAA-1333).